Reading from the N-terminus, the 152-residue chain is Ribosome maturation factor RimP (152 aa).

This sequence belongs to the RimP family.

The protein resides in the cytoplasm. Required for maturation of 30S ribosomal subunits. This Yersinia enterocolitica serotype O:8 / biotype 1B (strain NCTC 13174 / 8081) protein is Ribosome maturation factor RimP.